Reading from the N-terminus, the 814-residue chain is Kinesin-like protein KIF6 (814 aa).

Positions 5–345 (TIQIFARVKP…CRFAQRVALI (341 aa)) constitute a Kinesin motor domain. 97-104 (GQTGSGKT) contacts ATP. Coiled coils occupy residues 356 to 385 (NPRL…QRTE), 456 to 494 (LKEE…EALH), and 588 to 683 (EAKA…KEFE). The disordered stretch occupies residues 752–788 (LPSPCPSPHSQKQSSTSTPLEDSIPKRPVSSIPLTGD). Polar residues predominate over residues 759 to 771 (PHSQKQSSTSTPL).

Belongs to the TRAFAC class myosin-kinesin ATPase superfamily. Kinesin family.

Its subcellular location is the cytoplasm. The protein localises to the cytoskeleton. This is Kinesin-like protein KIF6 (KIF6) from Homo sapiens (Human).